Reading from the N-terminus, the 347-residue chain is UDP-3-O-acylglucosamine N-acyltransferase (347 aa).

Residue His-241 is the Proton acceptor of the active site.

It belongs to the transferase hexapeptide repeat family. LpxD subfamily. Homotrimer.

It catalyses the reaction a UDP-3-O-[(3R)-3-hydroxyacyl]-alpha-D-glucosamine + a (3R)-hydroxyacyl-[ACP] = a UDP-2-N,3-O-bis[(3R)-3-hydroxyacyl]-alpha-D-glucosamine + holo-[ACP] + H(+). Its pathway is bacterial outer membrane biogenesis; LPS lipid A biosynthesis. Functionally, catalyzes the N-acylation of UDP-3-O-acylglucosamine using 3-hydroxyacyl-ACP as the acyl donor. Is involved in the biosynthesis of lipid A, a phosphorylated glycolipid that anchors the lipopolysaccharide to the outer membrane of the cell. The polypeptide is UDP-3-O-acylglucosamine N-acyltransferase (Neisseria gonorrhoeae (strain ATCC 700825 / FA 1090)).